Consider the following 204-residue polypeptide: Somatotropin (204 aa).

A signal peptide spans 1 to 17 (MDRVILLLSVVSLGVSS). At Gln-18 the chain carries Pyrrolidone carboxylic acid. Residue His-36 coordinates Zn(2+). Cysteines 69 and 177 form a disulfide. Glu-186 contacts Zn(2+). The cysteines at positions 194 and 202 are disulfide-linked.

It belongs to the somatotropin/prolactin family.

The protein localises to the secreted. In terms of biological role, growth hormone plays an important role in growth control and is involved in the regulation of several anabolic processes. Implicated as an osmoregulatory substance important for seawater adaptation. The protein is Somatotropin (gh) of Sebastes schlegelii (Korean rockfish).